Consider the following 446-residue polypeptide: Probable D-serine dehydratase (446 aa).

At K116 the chain carries N6-(pyridoxal phosphate)lysine.

Belongs to the serine/threonine dehydratase family. DsdA subfamily. Pyridoxal 5'-phosphate serves as cofactor.

It catalyses the reaction D-serine = pyruvate + NH4(+). The polypeptide is Probable D-serine dehydratase (Bacillus thuringiensis subsp. konkukian (strain 97-27)).